The primary structure comprises 394 residues: Elongation factor Tu (394 aa).

The tr-type G domain maps to 10–204 (KPHVNIGTIG…AVDSWIPLPE (195 aa)). Residues 19 to 26 (GHVDHGKT) form a G1 region. 19–26 (GHVDHGKT) contributes to the GTP binding site. Threonine 26 serves as a coordination point for Mg(2+). Residues 60-64 (GITIN) are G2. The tract at residues 81 to 84 (DCPG) is G3. Residues 81–85 (DCPGH) and 136–139 (NKCD) each bind GTP. Positions 136–139 (NKCD) are G4. The segment at 174-176 (SGL) is G5.

This sequence belongs to the TRAFAC class translation factor GTPase superfamily. Classic translation factor GTPase family. EF-Tu/EF-1A subfamily. As to quaternary structure, monomer.

It is found in the cytoplasm. It catalyses the reaction GTP + H2O = GDP + phosphate + H(+). In terms of biological role, GTP hydrolase that promotes the GTP-dependent binding of aminoacyl-tRNA to the A-site of ribosomes during protein biosynthesis. The chain is Elongation factor Tu from Ureaplasma urealyticum serovar 10 (strain ATCC 33699 / Western).